The primary structure comprises 339 residues: Putative P2Y purinoceptor 10 (339 aa).

Residues 1-39 (MANLDKYTETFKMGSNSTSTAEIYCNVTNVKFQYSLYAT) lie on the Extracellular side of the membrane. 2 N-linked (GlcNAc...) asparagine glycosylation sites follow: Asn-16 and Asn-26. The chain crosses the membrane as a helical span at residues 40–60 (TYILIFIPGLLANSAALWVLC). Residues 61 to 68 (RFISKKNK) lie on the Cytoplasmic side of the membrane. A helical transmembrane segment spans residues 69–89 (AIIFMINLSVADLAHVLSLPL). Over 90 to 103 (RIYYYISHHWPFQR) the chain is Extracellular. A helical transmembrane segment spans residues 104–124 (ALCLLCFYLKYLNMYASICFL). Cys-106 and Cys-181 form a disulfide bridge. Topologically, residues 125–149 (TCISLQRCFFLLKPFRARDWKRRYD) are cytoplasmic. A helical membrane pass occupies residues 150-170 (VGISAAIWIVVGTACLPFPIL). Over 171–193 (RSTDLNNNKSCFADLGYKQMNAV) the chain is Extracellular. An N-linked (GlcNAc...) asparagine glycan is attached at Asn-178. Residues 194-214 (ALVGMITVAELAGFVIPVIII) form a helical membrane-spanning segment. Over 215–244 (AWCTWKTTISLRQPPMAFQGISERQKALRM) the chain is Cytoplasmic. A helical transmembrane segment spans residues 245–265 (VFMCAAVFFICFTPYHINFIF). The Extracellular portion of the chain corresponds to 266-288 (YTMVKETIISSCPVVRIALYFHP). Residues 289–309 (FCLCLASLCCLLDPILYYFMA) traverse the membrane as a helical segment. Residues 310–339 (SEFRDQLSRHGSSVTRSRLMSKESGSSMIG) are Cytoplasmic-facing.

Belongs to the G-protein coupled receptor 1 family. In terms of tissue distribution, weakly expressed in blood leukocytes.

The protein resides in the cell membrane. In terms of biological role, putative receptor for purines coupled to G-proteins. The polypeptide is Putative P2Y purinoceptor 10 (P2RY10) (Homo sapiens (Human)).